The following is a 224-amino-acid chain: PKHD-type hydroxylase Sbal195_0750 (224 aa).

Residues 78-176 form the Fe2OG dioxygenase domain; that stretch reads QFYPPLFNRY…RTAAFMWLQS (99 aa). Fe cation is bound by residues H96, D98, and H157. R167 provides a ligand contact to 2-oxoglutarate.

Fe(2+) is required as a cofactor. Requires L-ascorbate as cofactor.

This chain is PKHD-type hydroxylase Sbal195_0750, found in Shewanella baltica (strain OS195).